Reading from the N-terminus, the 83-residue chain is Cell division topological specificity factor (83 aa).

This sequence belongs to the MinE family.

Functionally, prevents the cell division inhibition by proteins MinC and MinD at internal division sites while permitting inhibition at polar sites. This ensures cell division at the proper site by restricting the formation of a division septum at the midpoint of the long axis of the cell. This Buchnera aphidicola subsp. Acyrthosiphon pisum (strain 5A) protein is Cell division topological specificity factor.